Here is a 320-residue protein sequence, read N- to C-terminus: Probable movement protein (320 aa).

Catalysis depends on residues histidine 144, aspartate 171, and serine 199. 2 disordered regions span residues 251-270 and 286-320; these read RRSRSISAKRGPNSRVQEKR and EFGRRASASEAPPGRSISMEDSHRPGKGTSDGSSP.

It belongs to the tobamoviruses movement protein family.

May play a role in virus cell to cell movement by increasing the size exclusion limit of plasmodesmata and forming a complex with viral RNA to assist its movement. May also have a papain-like protease activity and cleave the genome polyprotein. In Malus sylvestris (European crab apple), this protein is Probable movement protein.